A 163-amino-acid chain; its full sequence is Cyanate hydratase (163 aa).

Residues arginine 103, glutamate 106, and serine 129 contribute to the active site.

The protein belongs to the cyanase family.

It catalyses the reaction cyanate + hydrogencarbonate + 3 H(+) = NH4(+) + 2 CO2. Its function is as follows. Catalyzes the reaction of cyanate with bicarbonate to produce ammonia and carbon dioxide. This chain is Cyanate hydratase, found in Ajellomyces capsulatus (strain H143) (Darling's disease fungus).